Reading from the N-terminus, the 253-residue chain is Ubiquinone biosynthesis O-methyltransferase (253 aa).

S-adenosyl-L-methionine-binding residues include Arg45, Gly76, Asp97, and Met140.

This sequence belongs to the methyltransferase superfamily. UbiG/COQ3 family.

It catalyses the reaction a 3-demethylubiquinol + S-adenosyl-L-methionine = a ubiquinol + S-adenosyl-L-homocysteine + H(+). The enzyme catalyses a 3-(all-trans-polyprenyl)benzene-1,2-diol + S-adenosyl-L-methionine = a 2-methoxy-6-(all-trans-polyprenyl)phenol + S-adenosyl-L-homocysteine + H(+). It functions in the pathway cofactor biosynthesis; ubiquinone biosynthesis. Its function is as follows. O-methyltransferase that catalyzes the 2 O-methylation steps in the ubiquinone biosynthetic pathway. The polypeptide is Ubiquinone biosynthesis O-methyltransferase (Parvibaculum lavamentivorans (strain DS-1 / DSM 13023 / NCIMB 13966)).